The primary structure comprises 212 residues: uncharacterized protein (212 aa).

4 helical membrane-spanning segments follow: residues 34–54 (IFGI…PAPG), 59–79 (FGVL…ELWL), 126–146 (ILMG…IPGT), and 171–191 (AGMI…YVFF).

This sequence to R.meliloti ExoD.

The protein localises to the cell membrane. This is an uncharacterized protein from Synechocystis sp. (strain ATCC 27184 / PCC 6803 / Kazusa).